A 68-amino-acid polypeptide reads, in one-letter code: Large ribosomal subunit protein uL29 (68 aa).

Belongs to the universal ribosomal protein uL29 family.

In Roseobacter denitrificans (strain ATCC 33942 / OCh 114) (Erythrobacter sp. (strain OCh 114)), this protein is Large ribosomal subunit protein uL29.